The primary structure comprises 59 residues: Lantibiotic lacticin 3147 A1 (59 aa).

The propeptide occupies 1 to 29 (MNKNEIETQPVTWLEEVSDQNFDEDVFGA). The segment at residues 30–31 (CS) is a cross-link (lanthionine (Cys-Ser)). Residues Thr32 and Thr34 each carry the 2,3-didehydrobutyrine modification. Ser36 is subject to 2,3-didehydroalanine (Ser). Residues 38-48 (SDYWGNNGAWC) constitute a cross-link (lanthionine (Ser-Cys)). 2 cross-links (beta-methyllanthionine (Thr-Cys)) span residues 49–54 (TLTHEC) and 51–58 (THECMAWC).

Post-translationally, maturation of lantibiotics involves the enzymatic conversion of Thr, and Ser into dehydrated AA and the formation of thioether bonds with cysteine. This is followed by membrane translocation and cleavage of the modified precursor. It is not established whether the 2,3-didehydrobutyrines are the E- or Z-isomers. In the NMR model they were assumed to be the Z-isomer.

It localises to the secreted. Its function is as follows. Lanthionine-containing peptide antibiotic (lantibiotic) active on Gram-positive bacteria. The bactericidal activity of lantibiotics is based on depolarization of energized bacterial cytoplasmic membranes, initiated by the formation of aqueous transmembrane pores. When present individually lacticin 3147 A1 exhibits strong activity towards L.lactis strain AM2, weak activity towards L.lactis strain HP and no activity towards L.lactis strain IFPL359, but when combined with lacticin 3147 A2 it displays strong activity towards all three strains. This chain is Lantibiotic lacticin 3147 A1, found in Lactococcus lactis subsp. lactis (Streptococcus lactis).